Consider the following 415-residue polypeptide: Proline-serine-threonine phosphatase-interacting protein 1 (415 aa).

Residues 5–264 (LQFRDAFWCR…TLEGCDVEGD (260 aa)) form the F-BAR domain. 2 coiled-coil regions span residues 94–133 (LALA…KLSL) and 162–215 (SANG…TCEA). Position 318 is a phosphoserine (Ser318). Residue Tyr344 is modified to Phosphotyrosine; by ABL1. One can recognise an SH3 domain in the interval 358-415 (SSAQDYRALYDYTAQNSDELDISAGDILAVILEGEDGWWTVERNGQRGFVPGSYLEKL).

Homodimer. Homotrimer. Interacts (via coiled-coil domain) with CD2AP, PTPN12 and PTPN18. Interacts (via SH3 domain) with ABL1 and WAS. Interacts (via SH3 and coiled-coil domains) with MEFV (via B-box zinc finger); the interaction allows binding of MEFV to PYCARD and facilitates formation of PYCARD pyroptosomes. Interacts with DNM2 and FASLG. Interacts with CD2. In terms of processing, dephosphorylated on Tyr-344 by PTPN18, this event negatively regulates the association of PSTPIP1 with SH2 domain-containing proteins as tyrosine kinase. Phosphorylation of Tyr-344 is probably required for subsequent phosphorylation at other tyrosine residues. Phosphorylation is induced by activation of the EGFR and PDGFR in a ABL1 dependent manner. The phosphorylation regulates the interaction with WAS and with MEFV. In terms of tissue distribution, highly expressed in adult lung and spleen, and weakly expressed in testis, muscle, kidney, brain and heart. Highly expressed in spleen and thymus, moderately in lung, brain and muscle, and weakly expressed in heart and liver (at protein level).

The protein resides in the cytoplasm. It is found in the perinuclear region. The protein localises to the cell projection. Its subcellular location is the lamellipodium. It localises to the cleavage furrow. The protein resides in the cytoskeleton. It is found in the cell membrane. The protein localises to the uropodium. In terms of biological role, involved in regulation of the actin cytoskeleton. May regulate WAS actin-bundling activity. Bridges the interaction between ABL1 and PTPN18 leading to ABL1 dephosphorylation. May play a role as a scaffold protein between PTPN12 and WAS and allow PTPN12 to dephosphorylate WAS. Has the potential to physically couple CD2 and CD2AP to WAS. Acts downstream of CD2 and CD2AP to recruit WAS to the T-cell:APC contact site so as to promote the actin polymerization required for synapse induction during T-cell activation. Down-regulates CD2-stimulated adhesion through the coupling of PTPN12 to CD2. Also has a role in innate immunity and the inflammatory response. Recruited to inflammasomes by MEFV. Induces formation of pyroptosomes, large supramolecular structures composed of oligomerized PYCARD dimers which form prior to inflammatory apoptosis. Binding to MEFV allows MEFV to bind to PYCARD and facilitates pyroptosome formation. Regulates endocytosis and cell migration in neutrophils. This chain is Proline-serine-threonine phosphatase-interacting protein 1 (Pstpip1), found in Mus musculus (Mouse).